Here is a 429-residue protein sequence, read N- to C-terminus: Glutamate-1-semialdehyde 2,1-aminomutase (429 aa).

Residue Lys265 is modified to N6-(pyridoxal phosphate)lysine.

It belongs to the class-III pyridoxal-phosphate-dependent aminotransferase family. HemL subfamily. In terms of assembly, homodimer. Pyridoxal 5'-phosphate is required as a cofactor.

It localises to the cytoplasm. The catalysed reaction is (S)-4-amino-5-oxopentanoate = 5-aminolevulinate. Its pathway is porphyrin-containing compound metabolism; protoporphyrin-IX biosynthesis; 5-aminolevulinate from L-glutamyl-tRNA(Glu): step 2/2. The sequence is that of Glutamate-1-semialdehyde 2,1-aminomutase from Shewanella piezotolerans (strain WP3 / JCM 13877).